We begin with the raw amino-acid sequence, 379 residues long: Intracellular hyaluronan-binding protein 4.S (379 aa).

Disordered stretches follow at residues 52–260 (THRK…FSQE) and 332–379 (SLAR…PALA). Over residues 71–81 (GKKESQKDRKA) the composition is skewed to basic and acidic residues. Positions 107–116 (KVTQNENVDS) are enriched in polar residues. Basic and acidic residues-rich tracts occupy residues 118 to 133 (VKVD…REVR) and 139 to 158 (RSAE…DKQM). Residues 162-174 (GGRGGMRGRGRGG) are compositionally biased toward gly residues. Over residues 179 to 208 (TESDNLRGKREFDRHSGSDRARMRPEDKRG) the composition is skewed to basic and acidic residues. Acidic residues-rich tracts occupy residues 232-241 (EQVETTETEA) and 368-379 (NPDDPEDFPALA).

It belongs to the SERBP1-HABP4 family. In terms of assembly, associates with ribosomes; promoting ribosome stabilization. Interacts with eef2/eEF2; promoting ribosome stabilization.

The protein localises to the nucleus. It localises to the cytoplasm. The protein resides in the stress granule. Its subcellular location is the nucleolus. It is found in the nucleus speckle. The protein localises to the cajal body. Functionally, ribosome-binding protein that promotes ribosome hibernation, a process during which ribosomes are stabilized in an inactive state and preserved from proteasomal degradation. Acts via its association with eef2/eEF2 factor at the A-site of the ribosome, promoting ribosome stabilization in an inactive state compatible with storage. Plays a key role in ribosome hibernation in the mature egg by promoting ribosome stabilization. Ribosomes, which are produced in large quantities during oogenesis, are stored and translationally repressed in the egg and early embryo. The protein is Intracellular hyaluronan-binding protein 4.S of Xenopus laevis (African clawed frog).